The primary structure comprises 1265 residues: MSSLKVAVRVRPFNSREIDMDAQLIMEMENKKTRLLKPRLQSIRDAGRDNHHDFTFDYSYWSFDAEDPHFATQEQVYSDLGNDVVDCAYEGYNACVFAYGQTGSGKTFTMMGTPNNPGLIPRICEELFARMRVGQESGTGYRTHASYLEIYNERVKDLLAAQSTGHGLRVREHRSLGPYVENLSQHAVSDFDEIQECIARGNAQRTTASTNMNDTSSRSHAIFTITFVQAVFMNDMPSETVSKIHLVDLAGSERANATGATGQRLKEGAHINKSLVTLGSVISALAEQTGGGHNSSSSALATTPNGASKRVLYIPYRDSILTWLLKDSLGGNSKTIMIAALSPADCNYSETLSTLRYANRAKNIINKPTVNEDTNVKLIRELREEINKLKSMLAGDIHSLQPSLKVLADLQKKEAQEKVLTEEWTEKWKVAQSILQEQKSLGLRKSGVGVVLDSEMPHLIGIHNDVTTGVTLYSLKEGETRIGSEDADVAQDIELAGDGIRAQHCSIFLKGGVVTLHPWPLAQCWVNAHLIDEPKQISQGDIILLGRTNIFRFNNPAEAAKLRKDLSRSQLDMSRLSLITSSKENLLTCSIYSDEDGASPYKRPERQYYPQRPMSRDDPELQDENRKILDTIENALKQLNVERVQMHDQYKTKVRKLTEELIRLEQEEMDGLQLLNCREQELIARKDMLLWEKNNEKVQIDIVCRQISAFQTQLDSKKRDFSEYVAKELQELQDCGKLDEMGMKIEEGTPLNDELLLQVSDSLDLFAAQFIKDTVRRNNEEIRKLDEQIAEKERILNASTTKIAKVDETMLEIQAQLERLRLERAESEAESQAMRAKKQNMKLQLGNKSMSTSTSTNEADDVSKSDTYETCDTFHTAQSNLSLVSSPTITEGQQSPLSNCSCDAEDEAEDTRKDDLSGSSEETSRTCTAGPSSGSGSGSVGIGGSGSAPSCTPSSQAIMSDSGVCLDSRNQAILQNGHLNNYKQAVRTSDEDTGSCSSCELGRHSDVARPYCPLHSLRRKIAAQKALIMKNLETDLNKAQLDEHIADLQDLQRRYIQMEQEMLQSVQDLEAHAQCCADERSGMERQYELASSIMRSSVMSPTSMEESTSQIYSPSMTRSCPSMREFPEGEHFITIPSFVMRGAGKQTHYEYEVRIALPDGKLNILRRYSRFRELHLCMKHCYGAKISALPFPRRELFASNSEPVAKHRRRLLELYLRRLFVVCSKIPQCPIYEGPGGTGLTRASLVQLSSFFKKGLFENGKHGTG.

One can recognise a Kinesin motor domain in the interval 3-364 (SLKVAVRVRP…LRYANRAKNI (362 aa)). 100–107 (GQTGSGKT) is an ATP binding site. Disordered regions lie at residues 597-621 (GASP…DPEL), 828-864 (EAES…DVSK), and 884-954 (VSSP…CTPS). Coiled-coil stretches lie at residues 619 to 670 (PELQ…EEMD) and 768 to 848 (AQFI…LGNK). Composition is skewed to polar residues over residues 846–857 (GNKSMSTSTSTN), 884–901 (VSSP…SNCS), and 917–927 (SGSSEETSRTC). Gly residues predominate over residues 933–946 (SGSGSGSVGIGGSG). The stretch at 1035-1071 (DLNKAQLDEHIADLQDLQRRYIQMEQEMLQSVQDLEA) forms a coiled coil. A PX domain is found at 1129–1259 (GEHFITIPSF…SFFKKGLFEN (131 aa)).

It belongs to the TRAFAC class myosin-kinesin ATPase superfamily. Kinesin family. As to quaternary structure, interacts with Atg8a and Rab14.

The protein resides in the early endosome. Plus end-directed motor protein involved in asymmetric cell division of sensory organ precursor (SOP) cells by playing a role in the asymmetric localization of Sara-expressing endosomes to the pIIa daughter cell but not to the pIIb cell. Targets Sara-expressing endosomes to the central spindle which is symmetrically arranged in early cell division. During late cytokinesis, central spindle asymmetry is generated by enrichment of Patronin on the pIIb side which protects microtubules from depolymerization by Klp10A while unprotected microtubules on the pIIa side are disassembled by Klp10A, leading to the asymmetric delivery of Sara-expressing endosomes to the pIIa daughter cell. Also plays a role in regulation of autophagosome formation, fusion and positioning and is required for normal localization of Rab14. The chain is Kinesin-like protein Klp98A from Drosophila melanogaster (Fruit fly).